The following is a 1417-amino-acid chain: DNA-directed RNA polymerase subunit beta' (1417 aa).

Residues Cys68, Cys70, Cys83, and Cys86 each contribute to the Zn(2+) site. The Mg(2+) site is built by Asp458, Asp460, and Asp462. 4 residues coordinate Zn(2+): Cys811, Cys884, Cys891, and Cys894.

This sequence belongs to the RNA polymerase beta' chain family. As to quaternary structure, the RNAP catalytic core consists of 2 alpha, 1 beta, 1 beta' and 1 omega subunit. When a sigma factor is associated with the core the holoenzyme is formed, which can initiate transcription. Mg(2+) serves as cofactor. It depends on Zn(2+) as a cofactor.

The enzyme catalyses RNA(n) + a ribonucleoside 5'-triphosphate = RNA(n+1) + diphosphate. Its function is as follows. DNA-dependent RNA polymerase catalyzes the transcription of DNA into RNA using the four ribonucleoside triphosphates as substrates. The chain is DNA-directed RNA polymerase subunit beta' from Francisella tularensis subsp. tularensis (strain FSC 198).